Consider the following 297-residue polypeptide: ATP synthase gamma chain (297 aa).

This sequence belongs to the ATPase gamma chain family. As to quaternary structure, F-type ATPases have 2 components, CF(1) - the catalytic core - and CF(0) - the membrane proton channel. CF(1) has five subunits: alpha(3), beta(3), gamma(1), delta(1), epsilon(1). CF(0) has three main subunits: a, b and c.

The protein localises to the cell membrane. Produces ATP from ADP in the presence of a proton gradient across the membrane. The gamma chain is believed to be important in regulating ATPase activity and the flow of protons through the CF(0) complex. The chain is ATP synthase gamma chain from Beutenbergia cavernae (strain ATCC BAA-8 / DSM 12333 / CCUG 43141 / JCM 11478 / NBRC 16432 / NCIMB 13614 / HKI 0122).